The sequence spans 777 residues: MDSKESLTPGKEENPSSVLTQERGNVMDFSKILRGGATLKVSVSSTSLAAASQSDSKQQRLLVDFPKGSVSNAQQPDLSKAVSLSMGLYMGETETKVMGNDLGFPQQGQISLSSGETDLQLLEESIANLNRSTSVPENPKSSASSSVSAAPKEKEFPKTHSDVSSEQQNLKGQTGTNGGNVKLYTADQSTFDILQDLEFSSGSPGKETNQSPWRSDLLIDENCLLSPLAGEEDSFLLEGNSNEDCKPLILPDTKPKIKDNGDLVLSSSSNVTLPQVKTEKEDFIELCTPGVIKQEKLSTVYCQASFPGANVIGNKMSAISIHGVSTSGGQMYHYDMNTASLSQQQDQKPIFNVIPPIPVGSENWNRCQGSGDDNLTSLGTLNFPGRTVFSNGYSSPSMRPDVSSPPSSSSTATTGPPPKLCLVCSDEASGCHYGVLTCGSCKVFFKRAVEGQHNYLCAGRNDCIIDKIRRKNCPACRYRKCLQAGMNLEARKTKKKIKGIQQATTGVSQETSENPANKTIVPATLPQLTPTLVSLLEVIEPEVLYAGYDSTVPDSTWRIMTTLNMLGGRQVIAAVKWAKAIPGFRNLHLDDQMTLLQYSWMFLMAFALGWRSYRQASSNLLCFAPDLIINEQRMTLPCMYDQCKHMLYVSSELHRLQVSYEEYLCMKTLLLLSSVPKDGLKSQELFDEIRMTYIKELGKAIVKREGNSSQNWQRFYQLTKLLDSMHEVVENLLNYCFQTFLDKTMSIEFPEMLAEIITNQLPKYSNGNIKKLLFHQK.

Residues 1–14 show a composition bias toward basic and acidic residues; it reads MDSKESLTPGKEEN. The interval 1–23 is disordered; it reads MDSKESLTPGKEENPSSVLTQER. The interval 1–420 is modulating; the sequence is MDSKESLTPG…TATTGPPPKL (420 aa). The residue at position 8 (Thr8) is a Phosphothreonine. Arg23 is subject to Omega-N-methylarginine. A phosphoserine mark is found at Ser45, Ser113, Ser134, and Ser141. Positions 130 to 182 are disordered; it reads NRSTSVPENPKSSASSSVSAAPKEKEFPKTHSDVSSEQQNLKGQTGTNGGNVK. Over residues 134–150 the composition is skewed to low complexity; that stretch reads SVPENPKSSASSSVSAA. Over residues 151 to 163 the composition is skewed to basic and acidic residues; sequence PKEKEFPKTHSDV. Over residues 164-174 the composition is skewed to polar residues; the sequence is SSEQQNLKGQT. Ser203, Ser211, and Ser226 each carry phosphoserine. Residue Lys258 forms a Glycyl lysine isopeptide (Lys-Gly) (interchain with G-Cter in SUMO2) linkage. At Ser267 the chain carries Phosphoserine. Glycyl lysine isopeptide (Lys-Gly) (interchain with G-Cter in SUMO); alternate cross-links involve residues Lys277 and Lys293. Residues Lys277 and Lys293 each participate in a glycyl lysine isopeptide (Lys-Gly) (interchain with G-Cter in SUMO2); alternate cross-link. Over residues 394 to 414 the composition is skewed to low complexity; sequence SSPSMRPDVSSPPSSSSTATT. The tract at residues 394-415 is disordered; that stretch reads SSPSMRPDVSSPPSSSSTATTG. Phosphoserine is present on Ser404. Lys419 is covalently cross-linked (Glycyl lysine isopeptide (Lys-Gly) (interchain with G-Cter in ubiquitin)). NR C4-type zinc fingers lie at residues 421–441 and 457–481; these read CLVCSDEASGCHYGVLTCGSC and CAGRNDCIIDKIRRKNCPACRYRKC. Residues 421 to 486 constitute a DNA-binding region (nuclear receptor); that stretch reads CLVCSDEASG…RYRKCLQAGM (66 aa). N6-acetyllysine occurs at positions 480, 492, 494, and 495. The segment at 485–777 is interaction with CLOCK; it reads GMNLEARKTK…NIKKLLFHQK (293 aa). Positions 487–523 are hinge; the sequence is NLEARKTKKKIKGIQQATTGVSQETSENPANKTIVPA. Positions 524–758 constitute an NR LBD domain; the sequence is TLPQLTPTLV…FPEMLAEIIT (235 aa). Residues 532-697 form an interaction with CRY1 region; that stretch reads LVSLLEVIEP…EIRMTYIKEL (166 aa). Lys703 participates in a covalent cross-link: Glycyl lysine isopeptide (Lys-Gly) (interchain with G-Cter in SUMO).

Belongs to the nuclear hormone receptor family. NR3 subfamily. In terms of assembly, heteromultimeric cytoplasmic complex with HSP90AA1, HSPA1A/HSPA1B, and FKBP5 or another immunophilin such as PPID, STIP1, or the immunophilin homolog PPP5C. Upon ligand binding FKBP5 dissociates from the complex and FKBP4 takes its place, thereby linking the complex to dynein and mediating transport to the nucleus, where the complex dissociates. Probably forms a complex composed of chaperones HSP90 and HSP70, co-chaperones CDC37, PPP5C, TSC1 and client protein TSC2, CDK4, AKT, RAF1 and NR3C1; this complex does not contain co-chaperones STIP1/HOP and PTGES3/p23. Directly interacts with UNC45A. Binds to DNA as a homodimer, and as heterodimer with NR3C2 or the retinoid X receptor. Binds STAT5A and STAT5B homodimers and heterodimers. Interacts with NRIP1, POU2F1, POU2F2 and TRIM28. Interacts with several coactivator complexes, including the SMARCA4 complex, CREBBP/EP300, TADA2L (Ada complex) and p160 coactivators such as NCOA2 and NCOA6. Interaction with BAG1 inhibits transactivation. Interacts with HEXIM1 and TGFB1I1. Interacts with NCOA1. Interacts with NCOA3, SMARCA4, SMARCC1, SMARCD1, and SMARCE1. Interacts with CLOCK, CRY1 and CRY2 in a ligand-dependent fashion. Interacts with CIART. Interacts with RWDD3. Interacts with UBE2I/UBC9 and this interaction is enhanced in the presence of RWDD3. Interacts with GRIP1. Interacts with NR4A3 (via nuclear receptor DNA-binding domain), represses transcription activity of NR4A3 on the POMC promoter Nur response element (NurRE). Directly interacts with PNRC2 to attract and form a complex with UPF1 and DCP1A; the interaction leads to rapid mRNA degradation. Interacts with GSK3B. Interacts with FNIP1 and FNIP2. Interacts (via C-terminus) with HNRNPU (via C-terminus). Interacts with MCM3AP. Interacts (via domain NR LBD) with HSP90AA1 and HSP90AB1. In the absence of hormonal ligand, interacts with TACC1. Interacts (via NR LBD domain) with ZNF764 (via KRAB domain); the interaction regulates transcription factor activity of NR3C1 by directing its actions toward certain biologic pathways. Acetylation by CLOCK reduces its binding to glucocorticoid response elements and its transcriptional activity. In terms of processing, increased proteasome-mediated degradation in response to glucocorticoids. Post-translationally, phosphorylated in the absence of hormone; becomes hyperphosphorylated in the presence of glucocorticoid. The Ser-203, Ser-226 and Ser-404-phosphorylated forms are mainly cytoplasmic, and the Ser-211-phosphorylated form is nuclear. Phosphorylation at Ser-211 increases transcriptional activity. Phosphorylation at Ser-203, Ser-226 and Ser-404 decreases signaling capacity. Phosphorylation at Ser-404 may protect from glucocorticoid-induced apoptosis. Phosphorylation at Ser-203 and Ser-211 is not required in regulation of chromosome segregation. May be dephosphorylated by PPP5C, attenuates NR3C1 action. Ubiquitinated by UBR5, leading to its degradation: UBR5 specifically recognizes and binds ligand-bound NR3C1 when it is not associated with coactivators (NCOAs). In presence of NCOAs, the UBR5-degron is not accessible, preventing its ubiquitination and degradation. In terms of processing, sumoylation at Lys-277 and Lys-293 negatively regulates its transcriptional activity. Sumoylation at Lys-703 positively regulates its transcriptional activity in the presence of RWDD3. Sumoylation at Lys-277 and Lys-293 is dispensable whereas sumoylation at Lys-703 is critical for the stimulatory effect of RWDD3 on its transcriptional activity. Heat shock increases sumoylation in a RWWD3-dependent manner.

It is found in the cytoplasm. Its subcellular location is the nucleus. It localises to the mitochondrion. The protein resides in the cytoskeleton. The protein localises to the spindle. It is found in the microtubule organizing center. Its subcellular location is the centrosome. It localises to the chromosome. The protein resides in the nucleoplasm. Its function is as follows. Receptor for glucocorticoids (GC). Has a dual mode of action: as a transcription factor that binds to glucocorticoid response elements (GRE), both for nuclear and mitochondrial DNA, and as a modulator of other transcription factors. Affects inflammatory responses, cellular proliferation and differentiation in target tissues. Involved in chromatin remodeling. Plays a role in rapid mRNA degradation by binding to the 5' UTR of target mRNAs and interacting with PNRC2 in a ligand-dependent manner which recruits the RNA helicase UPF1 and the mRNA-decapping enzyme DCP1A, leading to RNA decay. Could act as a coactivator for STAT5-dependent transcription upon growth hormone (GH) stimulation and could reveal an essential role of hepatic GR in the control of body growth. Mediates glucocorticoid-induced apoptosis. Promotes accurate chromosome segregation during mitosis. May act as a tumor suppressor. May play a negative role in adipogenesis through the regulation of lipolytic and antilipogenic gene expression. The protein is Glucocorticoid receptor (NR3C1) of Aotus nancymaae (Ma's night monkey).